The following is a 499-amino-acid chain: Aspartyl/glutamyl-tRNA(Asn/Gln) amidotransferase subunit B (499 aa).

This sequence belongs to the GatB/GatE family. GatB subfamily. In terms of assembly, heterotrimer of A, B and C subunits.

The enzyme catalyses L-glutamyl-tRNA(Gln) + L-glutamine + ATP + H2O = L-glutaminyl-tRNA(Gln) + L-glutamate + ADP + phosphate + H(+). It carries out the reaction L-aspartyl-tRNA(Asn) + L-glutamine + ATP + H2O = L-asparaginyl-tRNA(Asn) + L-glutamate + ADP + phosphate + 2 H(+). In terms of biological role, allows the formation of correctly charged Asn-tRNA(Asn) or Gln-tRNA(Gln) through the transamidation of misacylated Asp-tRNA(Asn) or Glu-tRNA(Gln) in organisms which lack either or both of asparaginyl-tRNA or glutaminyl-tRNA synthetases. The reaction takes place in the presence of glutamine and ATP through an activated phospho-Asp-tRNA(Asn) or phospho-Glu-tRNA(Gln). The sequence is that of Aspartyl/glutamyl-tRNA(Asn/Gln) amidotransferase subunit B from Leifsonia xyli subsp. xyli (strain CTCB07).